Reading from the N-terminus, the 99-residue chain is Teretoxin Tsu6.4 (99 aa).

A signal peptide spans 1–21; the sequence is MRLLLILVLLTPVIVAFSVDE. The propeptide occupies 22 to 53; the sequence is ELNNADGANAASFTADQEVRHKRNLFPAIARR.

In terms of processing, contains 3 disulfide bonds. Expressed by the venom duct.

The protein resides in the secreted. The chain is Teretoxin Tsu6.4 from Terebra subulata (Chocolate spotted auger).